Here is a 257-residue protein sequence, read N- to C-terminus: Flavodoxin/ferredoxin--NADP reductase (257 aa).

The 109-residue stretch at 2–110 folds into the FAD-binding FR-type domain; the sequence is NPWINANVLK…EKSFGFFTLD (109 aa). FAD contacts are provided by residues 59–62, Y75, 83–85, and T125; these read RAYS and KLS. Residues 152–153, 182–183, R193, 223–225, and D229 contribute to the NADP(+) site; these read VR, SR, and NPA. 256 to 257 provides a ligand contact to FAD; that stretch reads YW.

This sequence belongs to the ferredoxin--NADP reductase type 1 family. FAD serves as cofactor.

The protein localises to the cytoplasm. The catalysed reaction is 2 reduced [2Fe-2S]-[ferredoxin] + NADP(+) + H(+) = 2 oxidized [2Fe-2S]-[ferredoxin] + NADPH. It carries out the reaction reduced [flavodoxin] + NADP(+) = oxidized [flavodoxin] + NADPH + 2 H(+). Transports electrons between flavodoxin or ferredoxin and NADPH. The sequence is that of Flavodoxin/ferredoxin--NADP reductase (fpr) from Buchnera aphidicola subsp. Schizaphis graminum (strain Sg).